Reading from the N-terminus, the 303-residue chain is Kynurenine formamidase (303 aa).

An HGGXW motif is present at residues 95-99 (HGGYW). Residue Ser164 is the Nucleophile of the active site. Catalysis depends on residues Asp247 and His279.

Belongs to the kynurenine formamidase family. As to quaternary structure, homodimer.

It localises to the cytoplasm. Its subcellular location is the cytosol. It is found in the nucleus. It catalyses the reaction N-formyl-L-kynurenine + H2O = L-kynurenine + formate + H(+). The protein operates within amino-acid degradation; L-tryptophan degradation via kynurenine pathway; L-kynurenine from L-tryptophan: step 2/2. In terms of biological role, catalyzes the hydrolysis of N-formyl-L-kynurenine to L-kynurenine, the second step in the kynurenine pathway of tryptophan degradation. Kynurenine may be further oxidized to nicotinic acid, NAD(H) and NADP(H). Required for elimination of toxic metabolites. The polypeptide is Kynurenine formamidase (Homo sapiens (Human)).